The sequence spans 383 residues: GTP-binding protein 10 homolog (383 aa).

The Obg domain maps to 22–157 (PTFLDTLRLA…RTVNLDLKLI (136 aa)). The OBG-type G domain occupies 158–353 (ADVGLVGFPN…VKSQLRRTLV (196 aa)). Residues 164–171 (GFPNAGKS), 211–215 (DLPGL), and 287–290 (NKMD) contribute to the GTP site.

It belongs to the TRAFAC class OBG-HflX-like GTPase superfamily. OBG GTPase family.

Its subcellular location is the nucleus. It is found in the nucleolus. In terms of biological role, may be involved in the ribosome maturation process. The protein is GTP-binding protein 10 homolog of Drosophila melanogaster (Fruit fly).